A 768-amino-acid chain; its full sequence is Integrin beta-8 (768 aa).

The N-terminal stretch at 1 to 42 (MCGSALGLPPAAFVRLRSCRPGPAAFLRAAWVLSLVLGLGRS) is a signal peptide. Residues 43-683 (ENSRCASSHA…ECFSSPSYLR (641 aa)) are Extracellular-facing. A PSI domain is found at 46-95 (RCASSHAVSCSECLALGPDCGWCVHEDFISGGPRSERCDIVSNLISKGCP). 25 cysteine pairs are disulfide-bonded: C47–C65, C55–C469, C58–C83, C68–C94, C211–C218, C266–C307, C407–C419, C439–C467, C471–C491, C471–C494, C481–C494, C499–C528, C511–C526, C520–C531, C533–C546, C553–C567, C561–C572, C574–C583, C585–C609, C593–C607, C601–C612, C614–C624, C627–C630, C634–C661, and C640–C657. Positions 146-384 (PVDLYYLVDV…NLVVEAYQKL (239 aa)) constitute a VWFA domain. Mg(2+) is bound by residues D154 and S156. D193 is a Ca(2+) binding site. An N-linked (GlcNAc...) asparagine glycan is attached at N233. Residues N249, D251, P253, and E254 each coordinate Ca(2+). E254 is a binding site for Mg(2+). A glycan (N-linked (GlcNAc...) asparagine) is linked at N402. N-linked (GlcNAc...) asparagine glycans are attached at residues N421, N431, and N456. 4 consecutive I-EGF domains span residues 471–495 (CEAS…PQCQ), 499–547 (CHQE…KYCE), 548–584 (KDDF…DRCQ), and 585–625 (CPSA…RFCE). Residue N648 is glycosylated (N-linked (GlcNAc...) asparagine). Residues 684–703 (IFFIIFIVTFLIGLLKILII) form a helical membrane-spanning segment. Topologically, residues 704-768 (RQVILQWNSS…NAHETFRCNF (65 aa)) are cytoplasmic.

It belongs to the integrin beta chain family. In terms of assembly, heterodimer of an alpha and a beta subunit. Beta-8 (ITGB8) associates with alpha-V (ITGAV) to form ITGAV:ITGB8. ITGAV:ITGB8 interacts with TGFB1. In terms of tissue distribution, placenta, kidney, brain, ovary, uterus and in several transformed cells.

The protein resides in the cell membrane. Its function is as follows. Integrin alpha-V:beta-8 (ITGAV:ITGB8) is a receptor for fibronectin. It recognizes the sequence R-G-D in its ligands. Integrin alpha-V:beta-6 (ITGAV:ITGB6) mediates R-G-D-dependent release of transforming growth factor beta-1 (TGF-beta-1) from regulatory Latency-associated peptide (LAP), thereby playing a key role in TGF-beta-1 activation on the surface of activated regulatory T-cells (Tregs). Required during vasculogenesis. The polypeptide is Integrin beta-8 (ITGB8) (Oryctolagus cuniculus (Rabbit)).